The following is a 190-amino-acid chain: RNA pyrophosphohydrolase (190 aa).

Residues 6–149 form the Nudix hydrolase domain; the sequence is GYRPNVGIVL…KRGVYARALC (144 aa). A Nudix box motif is present at residues 38 to 59; sequence GGMHSDETPVEAMYRELNEEIG.

This sequence belongs to the Nudix hydrolase family. RppH subfamily. A divalent metal cation is required as a cofactor.

Functionally, accelerates the degradation of transcripts by removing pyrophosphate from the 5'-end of triphosphorylated RNA, leading to a more labile monophosphorylated state that can stimulate subsequent ribonuclease cleavage. This Xylella fastidiosa (strain M12) protein is RNA pyrophosphohydrolase.